A 644-amino-acid polypeptide reads, in one-letter code: Transcription factor btd (644 aa).

Disordered regions lie at residues 16 to 65 and 101 to 196; these read HQAQ…TQQQ and APPS…AGSP. 2 stretches are compositionally biased toward low complexity: residues 101 to 119 and 140 to 196; these read APPS…SSPL and ASPN…AGSP. 3 C2H2-type zinc fingers span residues 333–357, 363–385, and 391–413; these read HICH…LRWH, FLCL…GRTH, and YACP…KKTH. Disordered stretches follow at residues 437–461 and 478–537; these read LEKK…QPDT and TSAG…SSSA. Composition is skewed to low complexity over residues 499–508 and 521–537; these read TTTTSSAAAS and AIQP…SSSA.

The protein resides in the nucleus. In terms of biological role, required for the development of the antennal, intercalary and mandibular segments of the head. In Drosophila melanogaster (Fruit fly), this protein is Transcription factor btd (btd).